Reading from the N-terminus, the 187-residue chain is Ribosome-recycling factor (187 aa).

Belongs to the RRF family.

The protein localises to the cytoplasm. Functionally, responsible for the release of ribosomes from messenger RNA at the termination of protein biosynthesis. May increase the efficiency of translation by recycling ribosomes from one round of translation to another. The chain is Ribosome-recycling factor from Rhodopseudomonas palustris (strain BisB5).